The following is a 454-amino-acid chain: UPF0210 protein Cphy_2797 (454 aa).

The protein belongs to the UPF0210 family. In terms of assembly, homodimer.

In Lachnoclostridium phytofermentans (strain ATCC 700394 / DSM 18823 / ISDg) (Clostridium phytofermentans), this protein is UPF0210 protein Cphy_2797.